The sequence spans 473 residues: Vasculin (473 aa).

Disordered regions lie at residues 1–25 (MAQHDFAPAWLNFPTPPSSTKSSLN), 46–149 (RHNS…REPN), and 191–342 (VGNL…QERD). A Phosphoserine modification is found at Ser-49. An Omega-N-methylarginine modification is found at Arg-87. The span at 119-133 (ETGRKEDKRERKQFE) shows a compositional bias: basic and acidic residues. Polar residues-rich tracts occupy residues 194-204 (LPSQPVKNGTG) and 251-286 (AFKSTAKNFSPSTNSVKECNRSNSSSPVDKLNQQPR). A phosphoserine mark is found at Ser-274, Ser-276, Ser-322, and Ser-381. Residues 293-329 (MRTDKKSEFLKALKRDRVEEEHEDESRAGSEKDDDSF) show a composition bias toward basic and acidic residues. A disordered region spans residues 444–473 (GPWKNSTFKPTTENDDTETSSSDTSDDDDV). The segment covering 456-473 (ENDDTETSSSDTSDDDDV) has biased composition (acidic residues).

This sequence belongs to the vasculin family. Interacts with GTF2B, GTF2F2, RNA polymerase II and TBP. In terms of tissue distribution, widely expressed. Some isoforms may be specifically expressed in veins and arteries (at protein level). Isoform 4 is widely expressed. Isoform 1, isoform 2 and isoform 3 may be specifically expressed in vascular smooth muscle cells.

The protein resides in the nucleus. It localises to the cytoplasm. Its function is as follows. Functions as a GC-rich promoter-specific transactivating transcription factor. The chain is Vasculin (GPBP1) from Homo sapiens (Human).